The sequence spans 288 residues: Small ribosomal subunit protein uS2 (288 aa).

The disordered stretch occupies residues 255 to 288 (ANNRDHKNNKNNSTIDNAENLKEENLVGGSNNES).

This sequence belongs to the universal ribosomal protein uS2 family.

This chain is Small ribosomal subunit protein uS2, found in Ehrlichia chaffeensis (strain ATCC CRL-10679 / Arkansas).